A 355-amino-acid chain; its full sequence is Elongation factor Ts (355 aa).

Residues 82-85 are involved in Mg(2+) ion dislocation from EF-Tu; that stretch reads TDFV.

This sequence belongs to the EF-Ts family.

Its subcellular location is the cytoplasm. Associates with the EF-Tu.GDP complex and induces the exchange of GDP to GTP. It remains bound to the aminoacyl-tRNA.EF-Tu.GTP complex up to the GTP hydrolysis stage on the ribosome. This is Elongation factor Ts from Helicobacter pylori (strain Shi470).